The sequence spans 1335 residues: Aldehyde oxidase 2 (1335 aa).

One can recognise a 2Fe-2S ferredoxin-type domain in the interval 8–95; that stretch reads DVLVFFVNGR…GAAVTTVEGV (88 aa). Positions 47, 52, 55, and 77 each coordinate [2Fe-2S] cluster. Position 116 (Gln-116) interacts with Mo-molybdopterin. Cys-117, Cys-120, Cys-152, and Cys-154 together coordinate [2Fe-2S] cluster. A Mo-molybdopterin-binding site is contributed by Cys-154. The FAD-binding PCMH-type domain occupies 242 to 427; sequence FRGDRVTWVS…ESVHIPHSQK (186 aa). Residues 270–277, Ala-351, Ser-360, His-364, Asp-373, and Leu-417 each bind FAD; that span reads LVLGNTAL. Mo-molybdopterin-binding positions include 821–822, 1103–1106, Gln-1218, and Leu-1285; these read GF and ASVG. Residue Glu-1287 is the Proton acceptor; for azaheterocycle hydroxylase activity of the active site.

Belongs to the xanthine dehydrogenase family. As to quaternary structure, homodimer. [2Fe-2S] cluster is required as a cofactor. It depends on FAD as a cofactor. Mo-molybdopterin serves as cofactor. As to expression, detected in kidney, Harderian gland and olfactory mucosa.

The protein localises to the cytoplasm. It carries out the reaction an aldehyde + O2 + H2O = a carboxylate + H2O2 + H(+). Oxidase with broad substrate specificity, oxidizing aromatic azaheterocycles, such as phthalazine, as well as aldehydes, such as benzaldehyde and retinal. The polypeptide is Aldehyde oxidase 2 (AOX2) (Cavia porcellus (Guinea pig)).